We begin with the raw amino-acid sequence, 363 residues long: NAD(P)H-quinone oxidoreductase subunit 1, chloroplastic (363 aa).

Transmembrane regions (helical) follow at residues 30–50, 104–124, 127–147, 253–273, 300–320, and 343–363; these read LVPILTLVLAITIGVLVIVWL, IAVISIILSYSVIPFSYHLVL, LGIGVFLWIAVSSIAPIGLLM, FGLFYVASYLNLLVSSLFVTV, VFGTTMGMFITLAKTYLFLFI, and FLLPISLGNLLLTTSFQLLSL.

This sequence belongs to the complex I subunit 1 family. As to quaternary structure, NDH is composed of at least 16 different subunits, 5 of which are encoded in the nucleus.

Its subcellular location is the plastid. It localises to the chloroplast thylakoid membrane. It carries out the reaction a plastoquinone + NADH + (n+1) H(+)(in) = a plastoquinol + NAD(+) + n H(+)(out). The enzyme catalyses a plastoquinone + NADPH + (n+1) H(+)(in) = a plastoquinol + NADP(+) + n H(+)(out). Functionally, NDH shuttles electrons from NAD(P)H:plastoquinone, via FMN and iron-sulfur (Fe-S) centers, to quinones in the photosynthetic chain and possibly in a chloroplast respiratory chain. The immediate electron acceptor for the enzyme in this species is believed to be plastoquinone. Couples the redox reaction to proton translocation, and thus conserves the redox energy in a proton gradient. This Piper cenocladum (Ant piper) protein is NAD(P)H-quinone oxidoreductase subunit 1, chloroplastic.